The sequence spans 68 residues: U1-agatoxin-Ta1c (68 aa).

The N-terminal stretch at 1-17 (MKLQLMICLVLLPCFFC) is a signal peptide. 3 cysteine pairs are disulfide-bonded: C23-C53, C39-C49, and C42-C62. Position 67 is a lysine amide (K67).

This sequence belongs to the helical arthropod-neuropeptide-derived (HAND) family. In terms of tissue distribution, expressed by the venom gland.

It is found in the secreted. Its function is as follows. Toxin that paralyzes insects. May have a direct effect on the insect central nervous system. This chain is U1-agatoxin-Ta1c, found in Eratigena agrestis (Hobo spider).